Here is a 170-residue protein sequence, read N- to C-terminus: Neurotensin/neuromedin N (170 aa).

The signal sequence occupies residues 1–23; the sequence is MMAGMKIQLVCMLLLAFSSWSLC. Pyrrolidone carboxylic acid is present on glutamine 151.

It belongs to the neurotensin family. In terms of assembly, interacts with NTSR1. Interacts with SORT1. Interacts with SORL1. Post-translationally, neurotensin is cleaved and degraded by Angiotensin-converting enzyme (ACE) and neprilysin (MME).

It localises to the secreted. Its subcellular location is the cytoplasmic vesicle. The protein resides in the secretory vesicle. Neurotensin may play an endocrine or paracrine role in the regulation of fat metabolism. It causes contraction of smooth muscle. In Homo sapiens (Human), this protein is Neurotensin/neuromedin N (NTS).